The chain runs to 420 residues: MNIFNNNLHETDKEINEIIKHEKLRQSNVIELIASENFVSPAVLEAQGALLTNKYAEGYPSKRFYNGCEEVDKAENLAIERVKKLFNCKYANVQPHSGSQANQAVYLALLQPGDTVLGMSLDSGGHLTHGAAPNMSGKWFNAVSYSVNKETYLIDYDEIERLADLHKPKLLIAGFSAYPRNIDFAKFREIVDKVGAYFMADIAHIAGLVATGEHQSPIPYAHAVTSTTHKTLRGPRGGLILSKDEEIGHKINSALFPGLQGGPLMHIIAAKAVAFLENLQPEYKSYIQQVISNAKALASSLQERGYDILTGGTDNHIVLVDLRKDGITGKLAANSLDRAGITCNKNAIPFDETSPFITSGIRLGTPACTTRGFKEKDFVLVGHMVADILDGLKNNEDNSALEQKVLNEVTKLIELFPFYG.

(6S)-5,6,7,8-tetrahydrofolate-binding positions include Leu-121 and 125 to 127 (GHL). Lys-230 carries the post-translational modification N6-(pyridoxal phosphate)lysine. (6S)-5,6,7,8-tetrahydrofolate-binding positions include Glu-246 and 354-356 (SPF).

It belongs to the SHMT family. Homodimer. Requires pyridoxal 5'-phosphate as cofactor.

The protein localises to the cytoplasm. The catalysed reaction is (6R)-5,10-methylene-5,6,7,8-tetrahydrofolate + glycine + H2O = (6S)-5,6,7,8-tetrahydrofolate + L-serine. It participates in one-carbon metabolism; tetrahydrofolate interconversion. The protein operates within amino-acid biosynthesis; glycine biosynthesis; glycine from L-serine: step 1/1. In terms of biological role, catalyzes the reversible interconversion of serine and glycine with tetrahydrofolate (THF) serving as the one-carbon carrier. This reaction serves as the major source of one-carbon groups required for the biosynthesis of purines, thymidylate, methionine, and other important biomolecules. Also exhibits THF-independent aldolase activity toward beta-hydroxyamino acids, producing glycine and aldehydes, via a retro-aldol mechanism. The sequence is that of Serine hydroxymethyltransferase from Rickettsia peacockii (strain Rustic).